An 874-amino-acid polypeptide reads, in one-letter code: Collagen alpha-2(I) chain (874 aa).

The disordered stretch occupies residues 1 to 874 (SGGFDFSFLP…FGYEGDFYRA (874 aa)). Residues Pro10 and Pro13 each carry the 4-hydroxyproline modification. Lys16 bears the Allysine mark. The segment covering 27 to 66 (LMGPRGPPGASGAPGPQGFQGPAGEPGEPGQTGPAGARGP) has biased composition (low complexity). 4-hydroxyproline is present on residues Pro34 and Pro40. Lys93 is subject to 5-hydroxylysine; alternate. Lys93 carries O-linked (Gal...) hydroxylysine; alternate glycosylation. Low complexity-rich tracts occupy residues 110 to 143 (ARGR…SAGP), 188 to 209 (PGAN…AGAP), and 218 to 236 (PGPV…AGSK). Residues 237-246 (GESGGKGEPG) are compositionally biased toward gly residues. Over residues 247–257 (SAGPQGPPGSS) the composition is skewed to low complexity. 4-hydroxyproline occurs at positions 317 and 320. Low complexity-rich tracts occupy residues 346–365 (LPGI…RGEA), 434–451 (PGES…SRGP), and 463–473 (EPGVVGAPGTA). The segment covering 474-483 (GPAGSGGLPG) has biased composition (gly residues). Low complexity-rich tracts occupy residues 491–538 (RGEV…PRGS) and 545–565 (VGPA…QPGA). A compositionally biased stretch (basic and acidic residues) spans 566–575 (KGERGTKGPK). Residues 583-593 (PTGPVGSAGPA) are compositionally biased toward low complexity. The segment covering 603-612 (GSRGDGGPPG) has biased composition (gly residues). Residues 614–623 (TGFPGAAGRT) show a composition bias toward low complexity. A compositionally biased stretch (gly residues) spans 648–662 (GPVGRGETGAGGPPG). 2 stretches are compositionally biased toward low complexity: residues 663–697 (FTGE…LGLP) and 705–724 (LPGV…AGPP). Gly residues predominate over residues 725 to 744 (GARGDGNPGSDGPPGRGAAG). 2 stretches are compositionally biased toward low complexity: residues 745–755 (APGPHGTVGPA) and 763–778 (EPGP…ALGP).

Belongs to the fibrillar collagen family. As to quaternary structure, trimers of one alpha 2(I) and two alpha 1(I) chains. Interacts (via C-terminus) with TMEM131 (via PapD-L domain); the interaction is direct and is involved in assembly and TRAPPIII ER-to-Golgi transport complex-dependent secretion of collagen. In terms of processing, prolines at the third position of the tripeptide repeating unit (G-X-Y) are hydroxylated in some or all of the chains. Expressed in bones.

It localises to the secreted. It is found in the extracellular space. The protein resides in the extracellular matrix. Type I collagen is a member of group I collagen (fibrillar forming collagen). The polypeptide is Collagen alpha-2(I) chain (Megalonyx jeffersonii (Jefferson's ground sloth)).